A 95-amino-acid polypeptide reads, in one-letter code: Large ribosomal subunit protein bL28 (95 aa).

The interval 1 to 28 (MARKRTLGGKAPQAGNKVSHSQRKTRRQ) is disordered.

This sequence belongs to the bacterial ribosomal protein bL28 family.

This is Large ribosomal subunit protein bL28 from Magnetococcus marinus (strain ATCC BAA-1437 / JCM 17883 / MC-1).